Consider the following 390-residue polypeptide: tRNA-specific 2-thiouridylase MnmA (390 aa).

ATP contacts are provided by residues 33–40 and M59; that span reads AMSGGVDS. Residue C131 is the Nucleophile of the active site. The cysteines at positions 131 and 230 are disulfide-linked. G155 lines the ATP pocket. The segment at 180–182 is interaction with tRNA; sequence KDQ. The active-site Cysteine persulfide intermediate is the C230.

This sequence belongs to the MnmA/TRMU family.

It is found in the cytoplasm. It carries out the reaction S-sulfanyl-L-cysteinyl-[protein] + uridine(34) in tRNA + AH2 + ATP = 2-thiouridine(34) in tRNA + L-cysteinyl-[protein] + A + AMP + diphosphate + H(+). Catalyzes the 2-thiolation of uridine at the wobble position (U34) of tRNA, leading to the formation of s(2)U34. The sequence is that of tRNA-specific 2-thiouridylase MnmA from Symbiobacterium thermophilum (strain DSM 24528 / JCM 14929 / IAM 14863 / T).